The sequence spans 414 residues: Serine--tRNA ligase (414 aa).

230 to 232 (TAE) contacts L-serine. 261 to 263 (RKE) contributes to the ATP binding site. Residue glutamate 284 participates in L-serine binding. 348–351 (EISS) contributes to the ATP binding site. Serine 382 is an L-serine binding site.

It belongs to the class-II aminoacyl-tRNA synthetase family. Type-1 seryl-tRNA synthetase subfamily. In terms of assembly, homodimer. The tRNA molecule binds across the dimer.

The protein localises to the cytoplasm. The catalysed reaction is tRNA(Ser) + L-serine + ATP = L-seryl-tRNA(Ser) + AMP + diphosphate + H(+). It catalyses the reaction tRNA(Sec) + L-serine + ATP = L-seryl-tRNA(Sec) + AMP + diphosphate + H(+). It participates in aminoacyl-tRNA biosynthesis; selenocysteinyl-tRNA(Sec) biosynthesis; L-seryl-tRNA(Sec) from L-serine and tRNA(Sec): step 1/1. Its function is as follows. Catalyzes the attachment of serine to tRNA(Ser). Is also able to aminoacylate tRNA(Sec) with serine, to form the misacylated tRNA L-seryl-tRNA(Sec), which will be further converted into selenocysteinyl-tRNA(Sec). This Sulfurovum sp. (strain NBC37-1) protein is Serine--tRNA ligase.